Here is a 288-residue protein sequence, read N- to C-terminus: Proteasome subunit beta (288 aa).

The propeptide at 1-60 (MESNADWGSRGGLPQAFLTPGISSFSEFLKGFAPEYLPSGRPLPGGLGSASAAGDIAPHG) is removed in mature form; by autocatalysis. The Nucleophile role is filled by T61.

This sequence belongs to the peptidase T1B family. As to quaternary structure, the 20S proteasome core is composed of 14 alpha and 14 beta subunits that assemble into four stacked heptameric rings, resulting in a barrel-shaped structure. The two inner rings, each composed of seven catalytic beta subunits, are sandwiched by two outer rings, each composed of seven alpha subunits. The catalytic chamber with the active sites is on the inside of the barrel. Has a gated structure, the ends of the cylinder being occluded by the N-termini of the alpha-subunits. Is capped by the proteasome-associated ATPase, ARC.

The protein resides in the cytoplasm. The catalysed reaction is Cleavage of peptide bonds with very broad specificity.. It functions in the pathway protein degradation; proteasomal Pup-dependent pathway. The formation of the proteasomal ATPase ARC-20S proteasome complex, likely via the docking of the C-termini of ARC into the intersubunit pockets in the alpha-rings, may trigger opening of the gate for substrate entry. Interconversion between the open-gate and close-gate conformations leads to a dynamic regulation of the 20S proteasome proteolysis activity. Functionally, component of the proteasome core, a large protease complex with broad specificity involved in protein degradation. The protein is Proteasome subunit beta of Catenulispora acidiphila (strain DSM 44928 / JCM 14897 / NBRC 102108 / NRRL B-24433 / ID139908).